The chain runs to 431 residues: Divergent protein kinase domain 1B (431 aa).

The Cytoplasmic segment spans residues 1-30; the sequence is MRRLRRLVHLVLLCPFSKGLQGRLPGLRVK. The May mediate ER retention motif lies at 5–6; that stretch reads RR. The helical transmembrane segment at 31-51 threads the bilayer; that stretch reads YVLLVWLGIFVGSWMVYVHYS. The Lumenal segment spans residues 52–431; it reads SYSELCRGHV…WREISNTNYS (380 aa). Cystine bridges form between Cys-57/Cys-94 and Cys-62/Cys-117.

It belongs to the DIPK family. In terms of processing, among the many cysteines in the lumenal domain, most are probably involved in disulfide bonds. Expressed in kidney, testis, lung, heart, stomach, intestine, pancreas, liver and salivary gland. Strongly expressed in acute pancreatitis, brain, and in peripheral endothelial cells.

Its subcellular location is the endoplasmic reticulum membrane. This Mus musculus (Mouse) protein is Divergent protein kinase domain 1B (Dipk1b).